Here is a 166-residue protein sequence, read N- to C-terminus: Putative pre-16S rRNA nuclease (166 aa).

The protein belongs to the YqgF nuclease family.

The protein resides in the cytoplasm. Could be a nuclease involved in processing of the 5'-end of pre-16S rRNA. The polypeptide is Putative pre-16S rRNA nuclease (Mesorhizobium japonicum (strain LMG 29417 / CECT 9101 / MAFF 303099) (Mesorhizobium loti (strain MAFF 303099))).